The following is a 61-amino-acid chain: MXFLXFXLXLLXMXXMXXXDSSEEKFLRRLRRFDEGRYGPYQPFAPQPLYPQPYQPYQPQY.

An N-terminal signal peptide occupies residues 1–19; sequence MXFLXFXLXLLXMXXMXXX. The hydroxyapatite-binding; inhibits crystal growth stretch occupies residues 20–25; the sequence is DSSEEK. 2 positions are modified to phosphoserine: Ser21 and Ser22. The tract at residues 37–61 is disordered; the sequence is RYGPYQPFAPQPLYPQPYQPYQPQY. A hydrophobic; inhibits precipitation of calcium phosphate salts region spans residues 37-61; the sequence is RYGPYQPFAPQPLYPQPYQPYQPQY. Residues 43–61 are compositionally biased toward pro residues; that stretch reads PFAPQPLYPQPYQPYQPQY.

It belongs to the histatin/statherin family. As to expression, secreted by parotid and submandibular glands.

It localises to the secreted. Functionally, salivary protein that stabilizes saliva supersaturated with calcium salts by inhibiting the precipitation of calcium phosphate salts. It also modulates hydroxyapatite crystal formation on the tooth surface. The protein is Statherin (STATH) of Macaca fascicularis (Crab-eating macaque).